The primary structure comprises 597 residues: Aspartate--tRNA(Asp/Asn) ligase (597 aa).

E175 serves as a coordination point for L-aspartate. The segment at 199 to 202 (QLFK) is aspartate. R221 is a binding site for L-aspartate. Residues 221–223 (RDE) and Q230 each bind ATP. Residue H453 participates in L-aspartate binding. Residue E487 coordinates ATP. R494 is an L-aspartate binding site. 539–542 (GWDR) is a binding site for ATP. Residues 562 to 597 (SGGGVDPLTDAPAPITPEQRKESGIDAKPKKKETKN) form a disordered region. Basic and acidic residues predominate over residues 579-589 (EQRKESGIDAK).

Belongs to the class-II aminoacyl-tRNA synthetase family. Type 1 subfamily. In terms of assembly, homodimer.

The protein resides in the cytoplasm. It carries out the reaction tRNA(Asx) + L-aspartate + ATP = L-aspartyl-tRNA(Asx) + AMP + diphosphate. Its function is as follows. Aspartyl-tRNA synthetase with relaxed tRNA specificity since it is able to aspartylate not only its cognate tRNA(Asp) but also tRNA(Asn). Reaction proceeds in two steps: L-aspartate is first activated by ATP to form Asp-AMP and then transferred to the acceptor end of tRNA(Asp/Asn). This is Aspartate--tRNA(Asp/Asn) ligase from Corynebacterium kroppenstedtii (strain DSM 44385 / JCM 11950 / CIP 105744 / CCUG 35717).